A 237-amino-acid polypeptide reads, in one-letter code: N-alpha-acetyltransferase 40 (237 aa).

Glycine 2 carries N-myristoyl glycine lipidation. In terms of domain architecture, N-acetyltransferase spans 63 to 216 (SGLEPATVDW…EDCSYEILSR (154 aa)). Residues tyrosine 85, 127–129 (DVE), and tyrosine 138 each bind substrate. Acetyl-CoA is bound by residues 140 to 142 (VQL) and 148 to 153 (RKGLGK). A substrate-binding site is contributed by threonine 174. Residue asparagine 179 participates in acetyl-CoA binding. 2 residues coordinate substrate: serine 197 and tyrosine 211.

Belongs to the acetyltransferase family. NAA40 subfamily. Widely expressed; with the highest expression level in liver and the lowest expression in brain (at protein level).

It is found in the cytoplasm. It localises to the nucleus. It carries out the reaction N-terminal L-seryl-[histone H4] + acetyl-CoA = N-terminal N(alpha)-acetyl-L-seryl-[histone H4] + CoA + H(+). It catalyses the reaction N-terminal L-seryl-[histone H2A] + acetyl-CoA = N-terminal N(alpha)-acetyl-L-seryl-[histone H2A] + CoA + H(+). Functionally, N-alpha-acetyltransferase that specifically mediates the acetylation of the N-terminal residues of histones H4 and H2A. In contrast to other N-alpha-acetyltransferase, has a very specific selectivity for histones H4 and H2A N-terminus and specifically recognizes the 'Ser-Gly-Arg-Gly sequence'. Acts as a negative regulator of apoptosis. May play a role in hepatic lipid metabolism. The protein is N-alpha-acetyltransferase 40 of Homo sapiens (Human).